The primary structure comprises 515 residues: Protein FAM98A (515 aa).

Disordered stretches follow at residues 297–410 (VLMG…GYHG) and 432–515 (SGYQ…HYTS). Residues 302-311 (VPDRGGRPNE) show a composition bias toward basic and acidic residues. Over residues 382 to 394 (WTDGGSGSGGGYQ) the composition is skewed to gly residues. Basic and acidic residues predominate over residues 444–456 (RYQDGGHHGERGS). Over residues 457–481 (GRGGRGGRGGRGGRGSQGGGWGGRG) the composition is skewed to gly residues. Positions 485–501 (YHQGGQFEQHFQHGGYQ) are enriched in low complexity. The segment covering 502-515 (YSHSGFGQGRHYTS) has biased composition (polar residues).

It belongs to the FAM98 family. As to quaternary structure, interacts (via N- and C-terminus) with DDX1. Interacts (via N- and C-terminus) with C14orf166. Interacts with FAM98B. Interacts with PLEKHM1 (via N- and C-terminus).

In terms of biological role, positively stimulates PRMT1-induced protein arginine methylation. Involved in skeletal homeostasis. Positively regulates lysosome peripheral distribution and ruffled border formation in osteoclasts. The sequence is that of Protein FAM98A from Mus musculus (Mouse).